We begin with the raw amino-acid sequence, 207 residues long: MAKFDVVDLDLKKVSEIELSDDVFGTEPNAHLFYEVAKMQQINRRRGTVGVKNTSLVSGGGKKPWKQKGTGRARQGSIRASHWVGGGKAMAPKARDYFYRPPRKVRRGALKSALSLRAQEKTLIILDGFSLDAPKSKQAFEVLTKRLKLQNALVIDDKGNTNLHRSVRNLAKFDVLPPEGLNLEAVLRHSHLVLTSAAAKTLEGALS.

A disordered region spans residues Lys52 to Gly76.

This sequence belongs to the universal ribosomal protein uL4 family. As to quaternary structure, part of the 50S ribosomal subunit.

Functionally, one of the primary rRNA binding proteins, this protein initially binds near the 5'-end of the 23S rRNA. It is important during the early stages of 50S assembly. It makes multiple contacts with different domains of the 23S rRNA in the assembled 50S subunit and ribosome. In terms of biological role, forms part of the polypeptide exit tunnel. The chain is Large ribosomal subunit protein uL4 from Myxococcus xanthus (strain DK1622).